Here is a 500-residue protein sequence, read N- to C-terminus: Lysine--tRNA ligase (500 aa).

Positions 411 and 418 each coordinate Mg(2+).

The protein belongs to the class-II aminoacyl-tRNA synthetase family. In terms of assembly, homodimer. Mg(2+) serves as cofactor.

It localises to the cytoplasm. It catalyses the reaction tRNA(Lys) + L-lysine + ATP = L-lysyl-tRNA(Lys) + AMP + diphosphate. The polypeptide is Lysine--tRNA ligase (Actinobacillus pleuropneumoniae serotype 5b (strain L20)).